A 214-amino-acid chain; its full sequence is Large ribosomal subunit protein uL3 (214 aa).

Belongs to the universal ribosomal protein uL3 family. Part of the 50S ribosomal subunit. Forms a cluster with proteins L14 and L19.

In terms of biological role, one of the primary rRNA binding proteins, it binds directly near the 3'-end of the 23S rRNA, where it nucleates assembly of the 50S subunit. This is Large ribosomal subunit protein uL3 from Streptomyces coelicolor (strain ATCC BAA-471 / A3(2) / M145).